We begin with the raw amino-acid sequence, 309 residues long: Dioxygenase af480 (309 aa).

Residues His-153, Asp-155, and His-228 each contribute to the Fe cation site.

The protein belongs to the PhyH family. The cofactor is Fe cation.

The catalysed reaction is 5-dehydro-6-demethoxyfumagillol + 2-oxoglutarate + O2 = 5-dehydro-6-demethoxy-6-hydroxyfumagillol + succinate + CO2. It participates in secondary metabolite biosynthesis; terpenoid biosynthesis. Dioxygenase; part of the gene cluster that mediates the biosynthesis of fumagillin, a meroterpenoid that has numerous biological activities including irreversible inhibition of human type 2 methionine aminopeptidase (METAP2). Within the pathway, the dioxygenase af480 acts as a 5-dehydro-6-demethoxyfumagillol dioxygenase that hydroylates 5-keto-demethoxyfumagillol at position C-6. The pathway begins with the conversion of farnesyl pyrophosphate (FPP) to beta-trans-bergamotene by the membrane-bound beta-trans-bergamotene synthase af520. The multifunctional cytochrome P450 monooxygenase af510 then converts beta-trans-bergamotene into 5-keto-demethoxyfumagillol via several oxydation steps. 5-keto-demethoxyfumagillol is then subjected to successive C-6 hydroxylation and O-methylation by the dioxygenase af480 and O-methyltransferase af390-400, respectively, to yield 5-keto-fumagillol, which is then stereoselectively reduced by the keto-reductase af490 to 5R-hydroxy-seco-sesquiterpene. The next step is the polyketide transferase af380-catalyzed transfer of a dodecapentaenoyl group synthesized by the polyketide synthase af370 onto 5R-hydroxy-seco-sesquiterpene which leads to the production of prefumagillin. Finally, oxidative cleavage by the monooxygenase af470 converts prefumagillin to fumagillin. The polypeptide is Dioxygenase af480 (Aspergillus fumigatus (strain ATCC MYA-4609 / CBS 101355 / FGSC A1100 / Af293) (Neosartorya fumigata)).